Here is a 686-residue protein sequence, read N- to C-terminus: Potassium-transporting ATPase ATP-binding subunit 2 (686 aa).

Transmembrane regions (helical) follow at residues 37–57 (MFVV…PNLF), 64–84 (MILY…FANF), 223–243 (LLVS…PMAI), and 255–275 (VALT…AIGI). The active-site 4-aspartylphosphate intermediate is the Asp-306. Residues Asp-343, Glu-347, 376–383 (FTAQTRMS), and Lys-395 each bind ATP. Positions 518 and 522 each coordinate Mg(2+). The next 3 helical transmembrane spans lie at 588 to 608 (FAII…LNIM), 616 to 636 (AILS…PLAM), and 656 to 676 (VYGV…DLVI).

The protein belongs to the cation transport ATPase (P-type) (TC 3.A.3) family. Type IA subfamily. As to quaternary structure, the system is composed of three essential subunits: KdpA, KdpB and KdpC.

Its subcellular location is the cell membrane. It carries out the reaction K(+)(out) + ATP + H2O = K(+)(in) + ADP + phosphate + H(+). Part of the high-affinity ATP-driven potassium transport (or Kdp) system, which catalyzes the hydrolysis of ATP coupled with the electrogenic transport of potassium into the cytoplasm. This subunit is responsible for energy coupling to the transport system and for the release of the potassium ions to the cytoplasm. This chain is Potassium-transporting ATPase ATP-binding subunit 2, found in Listeria innocua serovar 6a (strain ATCC BAA-680 / CLIP 11262).